The following is a 575-amino-acid chain: TOX high mobility group box family member 3 (575 aa).

Disordered stretches follow at residues 189 to 258 (LGGA…QKPV) and 516 to 575 (QQLQ…VSIF). Positions 195 to 214 (SHTSPSPPASKSATPSPSSS) are enriched in low complexity. A compositionally biased stretch (basic and acidic residues) spans 222–238 (DANRAIGEKRTAPDSGK). Basic residues predominate over residues 239-249 (KPKTPKKKKKK). A DNA-binding region (HMG box) is located at residues 254-322 (PQKPVSAYAL…EYLKALAAYR (69 aa)). Residues 516–526 (QQLQHMQHQSQ) are compositionally biased toward low complexity. The span at 527–541 (PSPRQHSPVTSQITS) shows a compositional bias: polar residues. The segment covering 548–575 (SPQPASQQHQPQIQSQTQTQVLPQVSIF) has biased composition (low complexity).

Homodimer. Interacts (via HGM box) with CITED1 (via C-terminus); the interaction increases estrogen-response element (ERE)-dependent transcription and protection against cell death. Interacts with CREB1 (phosphorylated form). Interacts with CREB1; the interaction is not depolarization dependent. Interacts with CREBBP (via C-terminus).

It localises to the nucleus. Functionally, transcriptional coactivator of the p300/CBP-mediated transcription complex. Activates transactivation through cAMP response element (CRE) sites. Protects against cell death by inducing antiapoptotic and repressing pro-apoptotic transcripts. Stimulates transcription from the estrogen-responsive or BCL-2 promoters. Required for depolarization-induced transcription activation of the C-FOS promoter in neurons. Associates with chromatin to the estrogen-responsive C3 promoter region. This Mus musculus (Mouse) protein is TOX high mobility group box family member 3 (Tox3).